We begin with the raw amino-acid sequence, 115 residues long: Tyrosine-protein phosphatase 22 (115 aa).

The Tyrosine-protein phosphatase domain occupies 1–115 (WLMIVEQKCR…ETGGDAPMVV (115 aa)). Asp83 serves as a coordination point for substrate.

It belongs to the protein-tyrosine phosphatase family.

It catalyses the reaction O-phospho-L-tyrosyl-[protein] + H2O = L-tyrosyl-[protein] + phosphate. The polypeptide is Tyrosine-protein phosphatase 22 (STY-22) (Styela plicata (Wrinkled sea squirt)).